Consider the following 127-residue polypeptide: Small ribosomal subunit protein uS11 (127 aa).

The protein belongs to the universal ribosomal protein uS11 family. As to quaternary structure, part of the 30S ribosomal subunit. Interacts with proteins S7 and S18. Binds to IF-3.

Functionally, located on the platform of the 30S subunit, it bridges several disparate RNA helices of the 16S rRNA. Forms part of the Shine-Dalgarno cleft in the 70S ribosome. This chain is Small ribosomal subunit protein uS11, found in Streptococcus mutans serotype c (strain ATCC 700610 / UA159).